We begin with the raw amino-acid sequence, 438 residues long: Ribosomal protein uS12 methylthiotransferase RimO (438 aa).

The MTTase N-terminal domain maps to 1–115 (MKYFILSLGC…LDKLLADLGE (115 aa)). [4Fe-4S] cluster-binding residues include Cys-10, Cys-46, Cys-78, Cys-150, Cys-154, and Cys-157. Residues 136–366 (KSNEVYRYIK…MEVQQEISLN (231 aa)) form the Radical SAM core domain. Residues 369 to 437 (KALVGKKIPV…IYDLKGEFIN (69 aa)) enclose the TRAM domain.

This sequence belongs to the methylthiotransferase family. RimO subfamily. It depends on [4Fe-4S] cluster as a cofactor.

It localises to the cytoplasm. The enzyme catalyses L-aspartate(89)-[ribosomal protein uS12]-hydrogen + (sulfur carrier)-SH + AH2 + 2 S-adenosyl-L-methionine = 3-methylsulfanyl-L-aspartate(89)-[ribosomal protein uS12]-hydrogen + (sulfur carrier)-H + 5'-deoxyadenosine + L-methionine + A + S-adenosyl-L-homocysteine + 2 H(+). In terms of biological role, catalyzes the methylthiolation of an aspartic acid residue of ribosomal protein uS12. This is Ribosomal protein uS12 methylthiotransferase RimO from Carboxydothermus hydrogenoformans (strain ATCC BAA-161 / DSM 6008 / Z-2901).